We begin with the raw amino-acid sequence, 290 residues long: MIRGSIPALVTPFKNGELDLDTLKKLVDWQIAEGSTGLVPVGTTGESPTLSHEEHETVIEAVVQAAAGRVPVIAGAGSNSTTEGIRLIRFAERVGADAALVVTPYYNKPTQAGLMAHFTALHDCCNLPIVIYNIPGRSVVDMTPETMGRLAQLPRIIGVKDATGKIERVSQQRASCGAEFLQLSGEDATALGFNAHGGVGCISVTANVAPRLCAEFQQATLRGDYATALEYQDRLMPLHEAIFLEPGLVGAKYALSQLGLCSDEVRLPLVGLTDPTKARIDAAMRHAGLI.

Thr-44 contributes to the pyruvate binding site. Catalysis depends on Tyr-132, which acts as the Proton donor/acceptor. Residue Lys-160 is the Schiff-base intermediate with substrate of the active site. Ile-202 is a binding site for pyruvate.

It belongs to the DapA family. Homotetramer; dimer of dimers.

It localises to the cytoplasm. It catalyses the reaction L-aspartate 4-semialdehyde + pyruvate = (2S,4S)-4-hydroxy-2,3,4,5-tetrahydrodipicolinate + H2O + H(+). The protein operates within amino-acid biosynthesis; L-lysine biosynthesis via DAP pathway; (S)-tetrahydrodipicolinate from L-aspartate: step 3/4. Functionally, catalyzes the condensation of (S)-aspartate-beta-semialdehyde [(S)-ASA] and pyruvate to 4-hydroxy-tetrahydrodipicolinate (HTPA). The sequence is that of 4-hydroxy-tetrahydrodipicolinate synthase from Cereibacter sphaeroides (strain ATCC 17025 / ATH 2.4.3) (Rhodobacter sphaeroides).